Reading from the N-terminus, the 92-residue chain is U21-hexatoxin-Hi1a (92 aa).

The first 19 residues, 1-19 (MKTILSMLIFVALFAAIVG), serve as a signal peptide directing secretion. 4 disulfides stabilise this stretch: C41–C55, C48–C67, C54–C82, and C85–C92.

It belongs to the neurotoxin 21 family. In terms of tissue distribution, expressed by the venom gland.

It localises to the secreted. In terms of biological role, potent insecticidal toxin with probable ion channel impairing activity. In vivo, reversibly paralyzes all flies within 30 minutes, even at low dose (0.3 nmol/g). The sequence is that of U21-hexatoxin-Hi1a from Hadronyche infensa (Fraser island funnel-web spider).